The sequence spans 103 residues: UPF0145 protein HH_1800 (103 aa).

The protein belongs to the UPF0145 family.

In Helicobacter hepaticus (strain ATCC 51449 / 3B1), this protein is UPF0145 protein HH_1800.